Consider the following 188-residue polypeptide: MAFSVNYDSSFGGYSIHDYLGQWASTFGDVNHTNGNVTDANSGGFYGGSLSGSQYAISSTANQVTAFVAGGNLTYTLFNEPAHTLYGQLDSLSFGDGLSGGDTSPYSIQVPDVSFGGLNLSSLQAQGHDGVVHQVVYGLMSGDTGALETALNGILDDYGLSVNSTFDQVAAATAVGVQHADSPELLAA.

Heme is bound by residues histidine 32 and tyrosine 75.

Monomer.

Its subcellular location is the secreted. Functionally, can bind free heme and also acquire it from hemoglobin. Conveys heme from hemoglobin to the HasR receptor which releases it into the bacterium. HasR alone can take up heme but the synergy between HasA and HasR increases heme uptake 100-fold. The protein is Hemophore HasA (hasA) of Serratia marcescens.